The chain runs to 208 residues: Ypt/Rab-type GTPase YPT7 (208 aa).

GTP-binding positions include 17–23, 33–40, G67, and 126–129; these read SGVGKTS, YSQQYKAT, and NKID. The Effector region signature appears at 37-45; the sequence is YKATIGADF. K147 is covalently cross-linked (Glycyl lysine isopeptide (Lys-Gly) (interchain with G-Cter in ubiquitin)). 158 to 160 serves as a coordination point for GTP; that stretch reads SAK. Residues C206 and C208 are each lipidated (S-geranylgeranyl cysteine). Cysteine methyl ester is present on C208.

Belongs to the small GTPase superfamily. Rab family. Interacts with IVY1. Interacts with YIF1, YIP4 and YIP5. Interacts with the HOPS complex. Interacts with the class C-Vps complex. Interacts with VPS35. Interacts with VPS39. Interacts with the GDP dissociation inhibitor GDI1. Interacts with CCZ1.

It is found in the late endosome. It localises to the vacuole membrane. Its activity is regulated as follows. Rab activation is generally mediated by a guanine exchange factor (GEF), while inactivation through hydrolysis of bound GTP is catalyzed by a GTPase activating protein (GAP). YPT7 is activated by GEFs MON1-CCZ1 complex (MC1) and VAM6/VPS39, and inactivated by GAPs GYP7 and GYP1. Ypt/Rab-type GTPases are key regulators of membrane trafficking and intracellular vesicular transport. They act as molecular switches that convert between GTP-bound and GDP-bound states, and regulate virtually all steps of membrane traffic from the formation of the transport vesicle at the donor membrane to its fusion at the target membrane. In the GDP-bound state, Ypt proteins are predominantly cytosolic, solubilized through the interaction with a GDP dissociation inhibitor (GDI). In the GTP-bound state, the proteins are membrane bound and interact with specific effector proteins that select cargo, promote vesicle movement, or verify the correct site of fusion. Involved in regulation of vesicular protein transport in exo- and endocytosis. Involved in regulation of late endosome to vacuole trafficking and homotypic vacuole fusion, by interacting in its GTP-bound state on the donor membrane with the large multiprotein HOPS/class C-Vps tethering complex on the acceptor membrane. Involved in retromer assembly and cargo export, recognizing the cargo selection complex (CSC). GTP-bound YPT7 recruits CSC to vacuolar membranes via retromer subunit VPS35. Interacts with the HOPS complex subunit VPS39 independent of the HOPS complex at mitochondria-vacuole contact sites (vCLAMPs), providing a physical and metabolic interconnection between the endocytic pathway and mitochondria. In Saccharomyces cerevisiae (strain ATCC 204508 / S288c) (Baker's yeast), this protein is Ypt/Rab-type GTPase YPT7 (YPT7).